The chain runs to 671 residues: Solute carrier family 5 member 4 (671 aa).

Residues 1 to 38 lie on the Cytoplasmic side of the membrane; it reads MPAMGTALPRAMASTASVSTSTGSSELSSLSDNINNPA. A helical membrane pass occupies residues 39-59; the sequence is DISVIVIYFVVVMAVGVWAMV. Residues 60–65 are Extracellular-facing; that stretch reads KTNRST. A helical transmembrane segment spans residues 66–86; the sequence is VGGFFLAGRSMTWWPMGASLF. Over 87-89 the chain is Cytoplasmic; the sequence is ASN. A helical membrane pass occupies residues 90 to 110; it reads IGSGHFVGLAGTGAATGIAVT. Over 111 to 116 the chain is Extracellular; it reads AFESHS. Residues 117-137 form a helical membrane-spanning segment; it reads FALLLVLGWFFVPIYIKAGVM. Over 138 to 159 the chain is Cytoplasmic; sequence TMPEYLRKRFGGKRLQIYLSVL. Residues 160–180 form a helical membrane-spanning segment; that stretch reads SLFICVILTISADIFSGAIFI. Lys-181 is a topological domain (extracellular). The chain crosses the membrane as a helical span at residues 182–202; that stretch reads LALGLDLYLAIFILLAITAVF. Over 203 to 218 the chain is Cytoplasmic; the sequence is TITGGLASVIYTDTLQ. Residues 219 to 239 form a helical membrane-spanning segment; it reads AIIMLVGSFILMIYAFVEVGG. Residues 240–288 lie on the Extracellular side of the membrane; sequence YESFTEKYMNAIPSVVEGDNLTISPKCYTPQPDSFHIFRDAVTGDIPWP. Residues 289-309 traverse the membrane as a helical segment; it reads GTAFGMPITALWYWCINQVIV. The Cytoplasmic segment spans residues 310–324; sequence QRCLCGKNMSHVKAA. A helical transmembrane segment spans residues 325-345; the sequence is CIVCGYLKLLPIFFMVMPGMI. At 346-378 the chain is on the extracellular side; it reads SRILYTDMVACVVPSECVKQCGVDVGCTNYAYP. A helical transmembrane segment spans residues 379–399; the sequence is MLVLKLMPMGLRGLMLSVMLA. Residues 400-434 lie on the Cytoplasmic side of the membrane; it reads SLMSSLTSIFNSASTLFTMDLYTKIRKKASERELL. Residues 435 to 455 traverse the membrane as a helical segment; sequence IAGRLFVSVLIVTSILWVPIV. Residues 456–467 lie on the Extracellular side of the membrane; it reads EVSQGGQLIHYT. Residues 468 to 488 traverse the membrane as a helical segment; the sequence is EAISSYLGPPIAAVFLVAIFC. At 489–494 the chain is on the cytoplasmic side; sequence KRVNEQ. The chain crosses the membrane as a helical span at residues 495-515; the sequence is GAFWGLMVGLVLGLIRMIAEF. Topologically, residues 516-537 are extracellular; that stretch reads SYGTGSCLAPSSCPKVICGVHY. Residues 538–558 traverse the membrane as a helical segment; that stretch reads LYYAIILFFVSILVILGVSYL. The Cytoplasmic segment spans residues 559–650; it reads TKPIPDVHLY…DTSEKPFWRT (92 aa). Over residues 583 to 593 the composition is skewed to acidic residues; that stretch reads DLDAEDREENE. The segment at 583-604 is disordered; the sequence is DLDAEDREENEADARTEEDQTE. Over residues 594–604 the composition is skewed to basic and acidic residues; it reads ADARTEEDQTE. Residues 651 to 671 traverse the membrane as a helical segment; the sequence is VVNVNVIVLLAVAAFFYGYFA.

It belongs to the sodium:solute symporter (SSF) (TC 2.A.21) family.

Its subcellular location is the cell membrane. Its function is as follows. Generates D-glucose-induced depolarization in a pH-dependent and Na(+)-independent manner, with activity in acidic conditions (pH 5) but not neutral conditions. The chain is Solute carrier family 5 member 4 from Rattus norvegicus (Rat).